Consider the following 243-residue polypeptide: 2-C-methyl-D-erythritol 4-phosphate cytidylyltransferase (243 aa).

The protein belongs to the IspD/TarI cytidylyltransferase family. IspD subfamily. Homodimer.

The catalysed reaction is 2-C-methyl-D-erythritol 4-phosphate + CTP + H(+) = 4-CDP-2-C-methyl-D-erythritol + diphosphate. Its pathway is isoprenoid biosynthesis; isopentenyl diphosphate biosynthesis via DXP pathway; isopentenyl diphosphate from 1-deoxy-D-xylulose 5-phosphate: step 2/6. Functionally, catalyzes the formation of 4-diphosphocytidyl-2-C-methyl-D-erythritol from CTP and 2-C-methyl-D-erythritol 4-phosphate (MEP). The protein is 2-C-methyl-D-erythritol 4-phosphate cytidylyltransferase of Photorhabdus laumondii subsp. laumondii (strain DSM 15139 / CIP 105565 / TT01) (Photorhabdus luminescens subsp. laumondii).